Reading from the N-terminus, the 134-residue chain is Agouti-related protein (134 aa).

Positions 1–20 are cleaved as a signal peptide; that stretch reads MLTTMLLSCALLLAMPTMLG. The propeptide occupies 21–84; sequence AQIGLAPLEG…VLDPEGRKAR (64 aa). Cystine bridges form between Cys-89-Cys-104, Cys-96-Cys-110, Cys-103-Cys-121, Cys-107-Cys-131, and Cys-112-Cys-119. The 43-residue stretch at 89–131 folds into the Agouti domain; the sequence is CVRLHESCLGHQVPCCDPCATCYCRFFNAFCYCRKLGTATNPC. Residues 113 to 115 are interaction with melanocortin receptors; sequence RFF.

Interacts with melanocortin receptors MC3R, MC4R and MC5R.

Its subcellular location is the secreted. It is found in the golgi apparatus lumen. Plays a role in weight homeostasis. Involved in the control of feeding behavior through the central melanocortin system. Acts as alpha melanocyte-stimulating hormone antagonist by inhibiting cAMP production mediated by stimulation of melanocortin receptors within the hypothalamus and adrenal gland. Has very low activity with MC5R. Is an inverse agonist for MC3R and MC4R being able to suppress their constitutive activity. It promotes MC3R and MC4R endocytosis in an arrestin-dependent manner. The chain is Agouti-related protein (AGRP) from Sus scrofa (Pig).